The sequence spans 292 residues: MNRIRYCFELVSVLFLMFTANARARGRGAIDFDVNYVVTWGQDHILKLNQGKEVQLSMDYSSGSGFESKSHYGSGFFQMRIKLPPRDSAGVVTAFYLTSKGDTHDEVDFEFLGNRQGKPIAIQTNVFSNGQGGREQKFVPWFDPTTSFHTYGILWNPYQIVFYVDKVPIRVFKNIKKSGVNYPSKPMQLVASLWNGENWATSGGKEKINWAYAPFKAQYQGFSDHGCHVNGQSNNANVCGSTRYWWNTRTYSQLSANEQKVMENVRAKYMTYDYCSDRPRYPVPPSECRWNQ.

An N-terminal signal peptide occupies residues 1 to 24 (MNRIRYCFELVSVLFLMFTANARA). The GH16 domain occupies 25-219 (RGRGAIDFDV…WAYAPFKAQY (195 aa)). Glutamate 106 (nucleophile) is an active-site residue. The active-site Proton donor is the glutamate 110. Xyloglucan is bound by residues glutamate 110, 123-125 (QTN), 133-135 (GRE), 198-199 (NW), and glycine 203. 2 disulfides stabilise this stretch: cysteine 227–cysteine 239 and cysteine 275–cysteine 288. A xyloglucan-binding site is contributed by arginine 280.

It belongs to the glycosyl hydrolase 16 family. XTH group 1 subfamily. Post-translationally, contains at least one intrachain disulfide bond essential for its enzymatic activity.

The protein resides in the secreted. It localises to the cell wall. It is found in the extracellular space. Its subcellular location is the apoplast. It carries out the reaction breaks a beta-(1-&gt;4) bond in the backbone of a xyloglucan and transfers the xyloglucanyl segment on to O-4 of the non-reducing terminal glucose residue of an acceptor, which can be a xyloglucan or an oligosaccharide of xyloglucan.. May catalyze xyloglucan endohydrolysis (XEH) and/or endotransglycosylation (XET). Cleaves and religates xyloglucan polymers, an essential constituent of the primary cell wall, and thereby participates in cell wall construction of growing tissues. This chain is Xyloglucan endotransglucosylase/hydrolase protein 2 (XTH2), found in Arabidopsis thaliana (Mouse-ear cress).